A 528-amino-acid chain; its full sequence is Probable rhamnogalacturonate lyase A (528 aa).

Residues 1–20 (MFFQTGLLLSLSLWTKVAYA) form the signal peptide. Cystine bridges form between Cys-50–Cys-93 and Cys-184–Cys-193. Asn-56 carries N-linked (GlcNAc...) asparagine glycosylation. A glycan (N-linked (GlcNAc...) asparagine) is linked at Asn-351.

The protein belongs to the polysaccharide lyase 4 family.

Its subcellular location is the secreted. It carries out the reaction Endotype eliminative cleavage of L-alpha-rhamnopyranosyl-(1-&gt;4)-alpha-D-galactopyranosyluronic acid bonds of rhamnogalacturonan I domains in ramified hairy regions of pectin leaving L-rhamnopyranose at the reducing end and 4-deoxy-4,5-unsaturated D-galactopyranosyluronic acid at the non-reducing end.. Its function is as follows. Pectinolytic enzymes consist of four classes of enzymes: pectin lyase, polygalacturonase, pectin methylesterase and rhamnogalacturonase. Degrades the rhamnogalacturonan I (RG-I) backbone of pectin. Active against linseed rhamnogalacturonan. The sequence is that of Probable rhamnogalacturonate lyase A (rglA) from Aspergillus clavatus (strain ATCC 1007 / CBS 513.65 / DSM 816 / NCTC 3887 / NRRL 1 / QM 1276 / 107).